Consider the following 209-residue polypeptide: MTVLLFGFEPFLEYKENPSQLIAEALNGSTILKEEVKGVILPVEYEKIEDLIVTKIREMKPILTLGIGVAPGRAKITPEKIAINYKYSREGDNAGKKYKGEKIDPLGQDGIFTNIPVEDLVDLLNENGIPAELSLSAGSYLCNNAMYIIIREARKYNSLGGFIHVPLHESYAARIQRPIPSMSLDTMIRGIRLSMEFILTNKKENLTFS.

Catalysis depends on residues Glu79, Cys142, and His164.

Belongs to the peptidase C15 family. As to quaternary structure, homotetramer.

It is found in the cytoplasm. It catalyses the reaction Release of an N-terminal pyroglutamyl group from a polypeptide, the second amino acid generally not being Pro.. Its function is as follows. Removes 5-oxoproline from various penultimate amino acid residues except L-proline. The protein is Pyrrolidone-carboxylate peptidase of Saccharolobus islandicus (strain Y.N.15.51 / Yellowstone #2) (Sulfolobus islandicus).